A 251-amino-acid polypeptide reads, in one-letter code: Cell division protein ZapD (251 aa).

The protein belongs to the ZapD family. In terms of assembly, interacts with FtsZ.

It is found in the cytoplasm. Cell division factor that enhances FtsZ-ring assembly. Directly interacts with FtsZ and promotes bundling of FtsZ protofilaments, with a reduction in FtsZ GTPase activity. This is Cell division protein ZapD from Burkholderia mallei (strain NCTC 10247).